The sequence spans 645 residues: Threonine--tRNA ligase (645 aa).

In terms of domain architecture, TGS spans 1 to 63 (MEQINIQFPD…ETDGSIEIVT (63 aa)). The tract at residues 242 to 540 (DHRKIGKELE…LTEETKGAFP (299 aa)) is catalytic. Positions 336, 387, and 517 each coordinate Zn(2+).

Belongs to the class-II aminoacyl-tRNA synthetase family. Homodimer. Requires Zn(2+) as cofactor.

It is found in the cytoplasm. The catalysed reaction is tRNA(Thr) + L-threonine + ATP = L-threonyl-tRNA(Thr) + AMP + diphosphate + H(+). Catalyzes the attachment of threonine to tRNA(Thr) in a two-step reaction: L-threonine is first activated by ATP to form Thr-AMP and then transferred to the acceptor end of tRNA(Thr). Also edits incorrectly charged L-seryl-tRNA(Thr). The sequence is that of Threonine--tRNA ligase from Staphylococcus aureus (strain bovine RF122 / ET3-1).